A 330-amino-acid polypeptide reads, in one-letter code: MMWGAGSSMAWFSAGSGSVNVSSVDPVEEPTGPATLLPSPRAWDVVLCISGTLVSCENALVVAIIVGTPAFRAPMFLLVGSLAVADLLAGLGLVLHFAADFCIGSPEMSLMLVGVLAMAFTASIGSLLAITVDRYLSLYNALTYYSETTVTRTYVMLALVWVGALGLGLVPVLAWNCRDGLTTCGVVYPLSKNHLVVLAIAFFMVFGIMLQLYAQICRIVCRHAQQIALQRHLLPASHYVATRKGIATLAVVLGAFAACWLPFTVYCLLGDADSPRLYTYLTLLPATYNSMINPVIYAFRNQDVQKVLWAICCCCSTSKIPFRSRSPSDV.

Topologically, residues 1–42 are extracellular; it reads MMWGAGSSMAWFSAGSGSVNVSSVDPVEEPTGPATLLPSPRA. An N-linked (GlcNAc...) asparagine glycan is attached at Asn-20. The helical transmembrane segment at 43-62 threads the bilayer; sequence WDVVLCISGTLVSCENALVV. At 63–74 the chain is on the cytoplasmic side; the sequence is AIIVGTPAFRAP. Residues 75-98 form a helical membrane-spanning segment; sequence MFLLVGSLAVADLLAGLGLVLHFA. Topologically, residues 99 to 110 are extracellular; that stretch reads ADFCIGSPEMSL. Residues 111–132 form a helical membrane-spanning segment; it reads MLVGVLAMAFTASIGSLLAITV. Over 133–153 the chain is Cytoplasmic; that stretch reads DRYLSLYNALTYYSETTVTRT. The helical transmembrane segment at 154–173 threads the bilayer; that stretch reads YVMLALVWVGALGLGLVPVL. Residues 174 to 198 are Extracellular-facing; the sequence is AWNCRDGLTTCGVVYPLSKNHLVVL. Residues 199–217 form a helical membrane-spanning segment; sequence AIAFFMVFGIMLQLYAQIC. Residues 218-245 lie on the Cytoplasmic side of the membrane; it reads RIVCRHAQQIALQRHLLPASHYVATRKG. A helical transmembrane segment spans residues 246–272; it reads IATLAVVLGAFAACWLPFTVYCLLGDA. At 273–277 the chain is on the extracellular side; it reads DSPRL. Residues 278-299 form a helical membrane-spanning segment; it reads YTYLTLLPATYNSMINPVIYAF. The Cytoplasmic segment spans residues 300–330; it reads RNQDVQKVLWAICCCCSTSKIPFRSRSPSDV. Cys-313 is lipidated: S-palmitoyl cysteine. Residues Ser-324, Ser-326, and Ser-328 each carry the phosphoserine modification.

It belongs to the G-protein coupled receptor 1 family. Expressed in both the forebrain and hindbrain, with the highest level in habenula. Lower level expression in the testis. Expressed in several metabolically active peripheral tissues, although at lower levels than in the central nervous system (CNS).

It is found in the cell membrane. Constitutively active G-protein coupled receptor that maintains high 3'-5'-cyclic adenosine monophosphate (cAMP) levels that a plays a role in serveral processes including meiotic arrest in oocytes or neuronal development via activation of numerous intracellular signaling pathways. Acts as an essential activator of thermogenic adipocytes and drives thermogenesis via its intrinsic G(s)-coupling activity without the requirement of a ligand. Has a potential role in modulating a number of brain functions, including behavioral responses to stress, amyloid-beta peptide generation in neurons. Stimulates neurite outgrowth in cerebellar granular neurons modulated via PKA, ERK, and most strongly PI3K-mediated signaling pathways. In Mus musculus (Mouse), this protein is G-protein coupled receptor 3 (Gpr3).